A 411-amino-acid polypeptide reads, in one-letter code: MVVIEGIKYACERCIRGHRVSSCTHTQQPLIRIKPKGRPATQCLHCREARKNKALHVKCKCGSSSSKHAATCPCYSGGGCICTNKHPQVLPPNSTTTGANGCIVINKAVLDEGSQQQAQQAQQQSQSQQAQQQQQQPQPQASPILQQPQMPTPVHTTNVTTPPVATPTHSHRALSTTPSLSPQPQSPHSPESALKSVNFLGRTNSSSSLSSLHSGRNKNRIEKVRPSHNSLSAASQLANSPSSPFYAVTPPAWVDSPTLVPTGALDASYLQILNDDLSSPLLDSDVFSSLDMEPVAHSNNNHGGIPTGGSRALASTDINFDRFESTSPSSILSSWNLWGGVGGSDAPEMSVAANPSASASASSIQTPPSSNATPEWVQGQQQPCSVSPADVMLPFKRDDQESVFLTEPLYL.

The copper-fist DNA-binding region spans 1–40 (MVVIEGIKYACERCIRGHRVSSCTHTQQPLIRIKPKGRPA). The Zn(2+) site is built by cysteine 11, cysteine 14, cysteine 23, and histidine 25. Composition is skewed to low complexity over residues 115-190 (QQQA…PHSP), 205-214 (SSSSLSSLHS), 227-241 (SHNSLSAASQLANSP), and 350-370 (SVAANPSASASASSIQTPPSS). 2 disordered regions span residues 115–241 (QQQA…ANSP) and 348–389 (EMSV…VSPA).

The protein resides in the nucleus. In terms of biological role, transcriptional regulator involved in resistance to high copper concentration. The sequence is that of Copper resistance protein CRF1 (CRF1) from Yarrowia lipolytica (strain CLIB 122 / E 150) (Yeast).